Consider the following 211-residue polypeptide: Probable nicotinate-nucleotide adenylyltransferase (211 aa).

It belongs to the NadD family.

It carries out the reaction nicotinate beta-D-ribonucleotide + ATP + H(+) = deamido-NAD(+) + diphosphate. It functions in the pathway cofactor biosynthesis; NAD(+) biosynthesis; deamido-NAD(+) from nicotinate D-ribonucleotide: step 1/1. Its function is as follows. Catalyzes the reversible adenylation of nicotinate mononucleotide (NaMN) to nicotinic acid adenine dinucleotide (NaAD). The protein is Probable nicotinate-nucleotide adenylyltransferase of Legionella pneumophila (strain Lens).